The following is a 777-amino-acid chain: Acyl-homoserine lactone acylase PvdQ (777 aa).

Residues 1 to 25 (MIISRQLPSFCLAALFLSFSGGAHA) form the signal peptide. Residues 196 to 218 (AGLPAEHWQLAAARQQRFALDRG) constitute a propeptide, spacer peptide. The active-site Nucleophile is the Ser-219.

This sequence belongs to the peptidase S45 family. Heterodimer of an alpha subunit and a beta subunit processed from the same precursor.

It localises to the periplasm. The enzyme catalyses an N-acyl-L-homoserine lactone + H2O = L-homoserine lactone + a carboxylate. Functionally, catalyzes the deacylation of acyl-homoserine lactone (AHL or acyl-HSL), releasing homoserine lactone (HSL) and the corresponding fatty acid. Possesses a specificity for the degradation of long-chain acyl-HSLs (side chains of 11 to 14 carbons in length). In Pseudomonas fluorescens (strain ATCC BAA-477 / NRRL B-23932 / Pf-5), this protein is Acyl-homoserine lactone acylase PvdQ (pvdQ).